Here is a 380-residue protein sequence, read N- to C-terminus: Succinyl-diaminopimelate desuccinylase (380 aa).

A Zn(2+)-binding site is contributed by H69. The active site involves D71. D102 is a Zn(2+) binding site. E135 serves as the catalytic Proton acceptor. Zn(2+) is bound by residues E136, E164, and H353.

It belongs to the peptidase M20A family. DapE subfamily. Homodimer. Zn(2+) serves as cofactor. Requires Co(2+) as cofactor.

It carries out the reaction N-succinyl-(2S,6S)-2,6-diaminopimelate + H2O = (2S,6S)-2,6-diaminopimelate + succinate. It functions in the pathway amino-acid biosynthesis; L-lysine biosynthesis via DAP pathway; LL-2,6-diaminopimelate from (S)-tetrahydrodipicolinate (succinylase route): step 3/3. Functionally, catalyzes the hydrolysis of N-succinyl-L,L-diaminopimelic acid (SDAP), forming succinate and LL-2,6-diaminopimelate (DAP), an intermediate involved in the bacterial biosynthesis of lysine and meso-diaminopimelic acid, an essential component of bacterial cell walls. The chain is Succinyl-diaminopimelate desuccinylase from Cereibacter sphaeroides (strain ATCC 17029 / ATH 2.4.9) (Rhodobacter sphaeroides).